The chain runs to 323 residues: MVSVNLEAKKTVDVMIEKQDELNIAVSQLSNGATIIDCGVNVDGSFKAGELYTKVCLGGLADVGISIPGDLSEKFALPSVKIKTDSPAISTLGSQKAGWSVSVGDFFALGSGPARAICKKPAETYEEIGYEDTEADLAILTLEADVLPGEDVAQYIADECNVDVKDVYLLVAPTSSLVGSIQISGRVVENGTYKMLEAIKFDVTKVKHAAGIAPIAPIDPDGLKAMGKTNDAVLFGGRTYYYVESDENDDIADVAAKLPSSAADGYGKPFFDVFKEAEFDFYKIDKGMFAPAEVVINDLTTGKIYKEGYVNVDLLKKSFGVDN.

It belongs to the MCH family.

Its subcellular location is the cytoplasm. The enzyme catalyses 5,10-methenyl-5,6,7,8-tetrahydromethanopterin + H2O = N(5)-formyl-5,6,7,8-tetrahydromethanopterin + H(+). It participates in one-carbon metabolism; methanogenesis from CO(2); 5,10-methenyl-5,6,7,8-tetrahydromethanopterin from CO(2): step 3/3. Catalyzes the reversible interconversion of 5-formyl-H(4)MPT to methenyl-H(4)MPT(+). This is Methenyltetrahydromethanopterin cyclohydrolase from Methanobrevibacter smithii (strain ATCC 35061 / DSM 861 / OCM 144 / PS).